The chain runs to 70 residues: Small ribosomal subunit protein bS21 (70 aa).

Belongs to the bacterial ribosomal protein bS21 family.

The sequence is that of Small ribosomal subunit protein bS21 from Nitrosospira multiformis (strain ATCC 25196 / NCIMB 11849 / C 71).